We begin with the raw amino-acid sequence, 321 residues long: Probable arabinan endo-1,5-alpha-L-arabinosidase C (321 aa).

The first 20 residues, 1 to 20 (MYLYTLILLFLASVNVNAYA), serve as a signal peptide directing secretion. The Proton acceptor role is filled by Asp33. Asn75 and Asn192 each carry an N-linked (GlcNAc...) asparagine glycan. Glu200 acts as the Proton donor in catalysis. Asn224 carries N-linked (GlcNAc...) asparagine glycosylation.

Belongs to the glycosyl hydrolase 43 family.

It localises to the secreted. The catalysed reaction is Endohydrolysis of (1-&gt;5)-alpha-arabinofuranosidic linkages in (1-&gt;5)-arabinans.. Its pathway is glycan metabolism; L-arabinan degradation. Functionally, endo-1,5-alpha-L-arabinanase involved in degradation of pectin. Its preferred substrate is linear 1,5-alpha-L-arabinan. This Neosartorya fischeri (strain ATCC 1020 / DSM 3700 / CBS 544.65 / FGSC A1164 / JCM 1740 / NRRL 181 / WB 181) (Aspergillus fischerianus) protein is Probable arabinan endo-1,5-alpha-L-arabinosidase C (abnC).